Here is a 496-residue protein sequence, read N- to C-terminus: NADH-quinone oxidoreductase subunit N (496 aa).

Helical transmembrane passes span 8 to 28, 37 to 57, 73 to 93, 110 to 130, 131 to 151, 162 to 182, 203 to 223, 235 to 255, 271 to 291, 300 to 320, 341 to 361, 386 to 406, 421 to 441, and 464 to 484; these read LLST…VGLI, MFPL…YDFF, QFAG…VLST, LLLL…LLTM, YVGL…HPND, LVLG…IYGL, TILA…LVPF, PAPI…AALV, GLIL…LMAF, MAYS…AVSI, GVLF…AVIT, AAVL…AGFV, VWIA…YLSI, and FGMI…TPLA.

The protein belongs to the complex I subunit 2 family. In terms of assembly, NDH-1 is composed of 14 different subunits. Subunits NuoA, H, J, K, L, M, N constitute the membrane sector of the complex.

Its subcellular location is the cell membrane. It carries out the reaction a quinone + NADH + 5 H(+)(in) = a quinol + NAD(+) + 4 H(+)(out). In terms of biological role, NDH-1 shuttles electrons from NADH, via FMN and iron-sulfur (Fe-S) centers, to quinones in the respiratory chain. The immediate electron acceptor for the enzyme in this species is believed to be a menaquinone. Couples the redox reaction to proton translocation (for every two electrons transferred, four hydrogen ions are translocated across the cytoplasmic membrane), and thus conserves the redox energy in a proton gradient. This is NADH-quinone oxidoreductase subunit N from Desulfitobacterium hafniense (strain DSM 10664 / DCB-2).